Consider the following 1435-residue polypeptide: Protein clueless (1435 aa).

Residues 1 to 97 form a disordered region; sequence MALEMDSKNS…KPEGDGDADA (97 aa). Residues 18-35 are compositionally biased toward low complexity; it reads AAAATTKTNKAKENNNLA. The segment covering 38 to 50 has biased composition (polar residues); sequence KKNQSQNLVNGNG. A compositionally biased stretch (basic residues) spans 58 to 67; that stretch reads TKKKGKKNRN. A Phosphoserine modification is found at Ser-266. In terms of domain architecture, Clu spans 420 to 662; the sequence is RAEDAFSSKL…RTFPPDVNFL (243 aa). 2 stretches are compositionally biased toward basic and acidic residues: residues 719-731 and 752-762; these read KKPEETQSEEKKQ and PNEKEKDTPVE. 2 disordered regions span residues 719–762 and 952–998; these read KKPE…TPVE and VSND…SSSS. Residues 959–975 are compositionally biased toward basic residues; sequence KKRGGNGGKHNKHKSSK. Residues 988–998 are compositionally biased toward low complexity; it reads NGGSTTSSSSS. TPR repeat units lie at residues 1096 to 1129, 1222 to 1255, and 1257 to 1290; these read AYNFYTTGQAKIQQGLFKEGYELISEALNLLNNV, ALIDSNISLILHALGEYELSLRFIEHALKLNLKY, and GNKAMHVAVSYHLMARTQSCMGDFRSALNNEKET. The interval 1407 to 1435 is disordered; sequence EVLAPQDNNKEQAATAQQLTNGDKVAVSS. Residues 1417-1435 show a composition bias toward polar residues; that stretch reads EQAATAQQLTNGDKVAVSS.

It belongs to the CLU family.

The protein resides in the cytoplasm. MRNA-binding protein involved in proper cytoplasmic distribution of mitochondria. In Drosophila persimilis (Fruit fly), this protein is Protein clueless.